A 72-amino-acid chain; its full sequence is MSRRKVCRFTIEGVKEIDYKDVNKLKAYINETGKIVPSRVTGTSAKYQRQLATAIKRARFLALLPYCDRHFN.

This sequence belongs to the bacterial ribosomal protein bS18 family. Part of the 30S ribosomal subunit. Forms a tight heterodimer with protein bS6.

In terms of biological role, binds as a heterodimer with protein bS6 to the central domain of the 16S rRNA, where it helps stabilize the platform of the 30S subunit. The chain is Small ribosomal subunit protein bS18 from Francisella tularensis subsp. holarctica (strain FTNF002-00 / FTA).